A 386-amino-acid polypeptide reads, in one-letter code: Ovalbumin (386 aa).

Gly-2 is modified (N-acetylglycine). Ser-69 is modified (phosphoserine). A disulfide bridge links Cys-74 with Cys-121. A glycan (N-linked (GlcNAc...) asparagine) is linked at Asn-293. Ser-345 carries the phosphoserine modification.

The protein belongs to the serpin family. Ov-serpin subfamily. The N-terminus is blocked.

Its subcellular location is the secreted. Its function is as follows. Storage protein of egg white. Lacks protease inhibitory activity. The sequence is that of Ovalbumin (SERPINB14) from Dromaius novaehollandiae (Emu).